The primary structure comprises 199 residues: SCO2-like protein RBE_0029 (199 aa).

It belongs to the SCO1/2 family.

This Rickettsia bellii (strain RML369-C) protein is SCO2-like protein RBE_0029.